A 179-amino-acid chain; its full sequence is Large ribosomal subunit protein uL5 (179 aa).

It belongs to the universal ribosomal protein uL5 family. In terms of assembly, part of the 50S ribosomal subunit; part of the 5S rRNA/L5/L18/L25 subcomplex. Contacts the 5S rRNA and the P site tRNA. Forms a bridge to the 30S subunit in the 70S ribosome.

In terms of biological role, this is one of the proteins that bind and probably mediate the attachment of the 5S RNA into the large ribosomal subunit, where it forms part of the central protuberance. In the 70S ribosome it contacts protein S13 of the 30S subunit (bridge B1b), connecting the 2 subunits; this bridge is implicated in subunit movement. Contacts the P site tRNA; the 5S rRNA and some of its associated proteins might help stabilize positioning of ribosome-bound tRNAs. The polypeptide is Large ribosomal subunit protein uL5 (Exiguobacterium sp. (strain ATCC BAA-1283 / AT1b)).